The primary structure comprises 907 residues: Protein translocase subunit SecA (907 aa).

ATP-binding positions include Gln87, Gly105–Thr109, and Asp512. The segment at Gln834–Ile907 is disordered. Basic and acidic residues-rich tracts occupy residues Asp836–Arg853 and Glu873–Arg888. Cys892, Cys894, Cys903, and His904 together coordinate Zn(2+). A compositionally biased stretch (basic residues) spans Lys898–Ile907.

It belongs to the SecA family. Monomer and homodimer. Part of the essential Sec protein translocation apparatus which comprises SecA, SecYEG and auxiliary proteins SecDF-YajC and YidC. The cofactor is Zn(2+).

It localises to the cell inner membrane. The protein resides in the cytoplasm. The catalysed reaction is ATP + H2O + cellular proteinSide 1 = ADP + phosphate + cellular proteinSide 2.. In terms of biological role, part of the Sec protein translocase complex. Interacts with the SecYEG preprotein conducting channel. Has a central role in coupling the hydrolysis of ATP to the transfer of proteins into and across the cell membrane, serving both as a receptor for the preprotein-SecB complex and as an ATP-driven molecular motor driving the stepwise translocation of polypeptide chains across the membrane. In Aliivibrio fischeri (strain MJ11) (Vibrio fischeri), this protein is Protein translocase subunit SecA.